A 469-amino-acid polypeptide reads, in one-letter code: F-box only protein 3 (469 aa).

The 47-residue stretch at 10-56 (PLTLESLPTDPLLLILSFLDYRDLINCCYVSRRLSQLSSHDPLWRRH) folds into the F-box domain. In terms of domain architecture, ApaG spans 278 to 408 (VATTGDITVS…FHMACPTFRV (131 aa)). Residues 419 to 449 (EYEEMEEEEEEEEEEDDDDSADMDESDDDEE) are compositionally biased toward acidic residues. A disordered region spans residues 419-454 (EYEEMEEEEEEEEEEDDDDSADMDESDDDEEERQRR).

In terms of assembly, part of a SCF (SKP1-cullin-F-box) protein ligase complex SCF(FBXO3) consisting of FBXO3, SKP1, CUL1 and RBX1. Interacts with PML, interaction is direct and takes place either alone or within the SCF complex.

It localises to the nucleus. Its pathway is protein modification; protein ubiquitination. Functionally, substrate recognition component of the SCF (SKP1-CUL1-F-box protein)-type E3 ubiquitin ligase complex, SCF(FBXO3), which mediates the ubiquitination and subsequent proteasomal degradation of target proteins. Mediates the ubiquitination of HIPK2 and probably that of EP300, leading to rapid degradation by the proteasome. In the presence of PML, HIPK2 ubiquitination still occurs, but degradation is prevented. PML, HIPK2 and FBXO3 may act synergically to activate p53/TP53-dependent transactivation. The SCF(FBXO3) also acts as a regulator of inflammation by mediating ubiquitination and degradation of FBXL2 in response to lipopolysaccharide (LPS). The SCF(FBXO3) complex specifically recognizes FBXL2 phosphorylated at 'Thr-404' and promotes its ubiquitination. The sequence is that of F-box only protein 3 (FBXO3) from Bos taurus (Bovine).